Here is a 338-residue protein sequence, read N- to C-terminus: Glyceraldehyde-3-phosphate dehydrogenase 2 (338 aa).

Residues 11–12 (RI), Asp33, and Arg78 contribute to the NAD(+) site. Residues 149 to 151 (SCT), Thr180, 209 to 210 (TG), and Arg232 each bind D-glyceraldehyde 3-phosphate. Cys150 functions as the Nucleophile in the catalytic mechanism. Asn314 is an NAD(+) binding site.

This sequence belongs to the glyceraldehyde-3-phosphate dehydrogenase family. Homotetramer.

It localises to the cytoplasm. The catalysed reaction is D-glyceraldehyde 3-phosphate + phosphate + NAD(+) = (2R)-3-phospho-glyceroyl phosphate + NADH + H(+). The protein operates within carbohydrate degradation; glycolysis; pyruvate from D-glyceraldehyde 3-phosphate: step 1/5. In Agaricus bisporus (White button mushroom), this protein is Glyceraldehyde-3-phosphate dehydrogenase 2 (gpd2).